The primary structure comprises 392 residues: Galactokinase (392 aa).

Residues Arg-37, Glu-43, His-44, and Asp-46 each coordinate alpha-D-galactose. Gly-136, Gly-138, Ser-140, and Ser-141 together coordinate ATP. Asp-186 is an alpha-D-galactose binding site. Asp-186 serves as the catalytic Proton acceptor. Ser-230 carries the post-translational modification Phosphoserine. Residue Tyr-236 coordinates alpha-D-galactose.

This sequence belongs to the GHMP kinase family. GalK subfamily. As to quaternary structure, homodimer.

It catalyses the reaction alpha-D-galactose + ATP = alpha-D-galactose 1-phosphate + ADP + H(+). It functions in the pathway carbohydrate metabolism; galactose metabolism. Functionally, catalyzes the transfer of a phosphate from ATP to alpha-D-galactose and participates in the first committed step in the catabolism of galactose. The protein is Galactokinase (Galk1) of Mus musculus (Mouse).